Reading from the N-terminus, the 343-residue chain is N-acetyl-gamma-glutamyl-phosphate reductase (343 aa).

Residue Cys-152 is part of the active site.

This sequence belongs to the NAGSA dehydrogenase family. Type 1 subfamily.

It localises to the cytoplasm. The enzyme catalyses N-acetyl-L-glutamate 5-semialdehyde + phosphate + NADP(+) = N-acetyl-L-glutamyl 5-phosphate + NADPH + H(+). It participates in amino-acid biosynthesis; L-arginine biosynthesis; N(2)-acetyl-L-ornithine from L-glutamate: step 3/4. Its function is as follows. Catalyzes the NADPH-dependent reduction of N-acetyl-5-glutamyl phosphate to yield N-acetyl-L-glutamate 5-semialdehyde. In Methanopyrus kandleri (strain AV19 / DSM 6324 / JCM 9639 / NBRC 100938), this protein is N-acetyl-gamma-glutamyl-phosphate reductase.